Consider the following 721-residue polypeptide: Catalase-peroxidase 1 (721 aa).

Positions 98 to 223 (WHAAGSYRVA…LAAVQMGLIY (126 aa)) form a cross-link, tryptophyl-tyrosyl-methioninium (Trp-Tyr) (with M-249). Catalysis depends on His99, which acts as the Proton acceptor. The tryptophyl-tyrosyl-methioninium (Tyr-Met) (with W-98) cross-link spans 223-249 (YVNPEGVNGQPDPLRTAQDVRVTFGRM). His264 serves as a coordination point for heme b.

This sequence belongs to the peroxidase family. Peroxidase/catalase subfamily. In terms of assembly, homodimer or homotetramer. The cofactor is heme b. In terms of processing, formation of the three residue Trp-Tyr-Met cross-link is important for the catalase, but not the peroxidase activity of the enzyme.

It catalyses the reaction H2O2 + AH2 = A + 2 H2O. It carries out the reaction 2 H2O2 = O2 + 2 H2O. Bifunctional enzyme with both catalase and broad-spectrum peroxidase activity. The chain is Catalase-peroxidase 1 from Legionella pneumophila (strain Paris).